The chain runs to 209 residues: NADH-ubiquinone oxidoreductase subunit 9 (209 aa).

The protein belongs to the complex I 30 kDa subunit family. Complex I is composed of about 30 different subunits.

Its subcellular location is the mitochondrion inner membrane. The enzyme catalyses a ubiquinone + NADH + 5 H(+)(in) = a ubiquinol + NAD(+) + 4 H(+)(out). In terms of biological role, core subunit of the mitochondrial membrane respiratory chain NADH dehydrogenase (Complex I) that is believed to belong to the minimal assembly required for catalysis. Complex I functions in the transfer of electrons from NADH to the respiratory chain. The immediate electron acceptor for the enzyme is believed to be ubiquinone. The chain is NADH-ubiquinone oxidoreductase subunit 9 (NAD9) from Paramecium tetraurelia.